We begin with the raw amino-acid sequence, 140 residues long: Nucleoside diphosphate kinase (140 aa).

Residues K11, F59, R87, T93, R104, and N114 each coordinate ATP. The active-site Pros-phosphohistidine intermediate is H117.

Belongs to the NDK family. Homotetramer. Mg(2+) is required as a cofactor.

Its subcellular location is the cytoplasm. It catalyses the reaction a 2'-deoxyribonucleoside 5'-diphosphate + ATP = a 2'-deoxyribonucleoside 5'-triphosphate + ADP. The enzyme catalyses a ribonucleoside 5'-diphosphate + ATP = a ribonucleoside 5'-triphosphate + ADP. Functionally, major role in the synthesis of nucleoside triphosphates other than ATP. The ATP gamma phosphate is transferred to the NDP beta phosphate via a ping-pong mechanism, using a phosphorylated active-site intermediate. The sequence is that of Nucleoside diphosphate kinase from Methylorubrum populi (strain ATCC BAA-705 / NCIMB 13946 / BJ001) (Methylobacterium populi).